We begin with the raw amino-acid sequence, 126 residues long: Large ribosomal subunit protein bL20 (126 aa).

Belongs to the bacterial ribosomal protein bL20 family.

In terms of biological role, binds directly to 23S ribosomal RNA and is necessary for the in vitro assembly process of the 50S ribosomal subunit. It is not involved in the protein synthesizing functions of that subunit. This Frankia casuarinae (strain DSM 45818 / CECT 9043 / HFP020203 / CcI3) protein is Large ribosomal subunit protein bL20.